We begin with the raw amino-acid sequence, 67 residues long: Large ribosomal subunit protein bL35 (67 aa).

It belongs to the bacterial ribosomal protein bL35 family.

The protein is Large ribosomal subunit protein bL35 of Rhizobium etli (strain CIAT 652).